The sequence spans 228 residues: Sodium channel regulatory subunit beta-4 (228 aa).

The first 30 residues, 1–30 (MSRAGNRGNTQARWLGIGLLGLFLLPMYLS), serve as a signal peptide directing secretion. Positions 31-148 (LEVSVGKATT…KDLNNSATIF (118 aa)) constitute an Ig-like C2-type domain. The Extracellular segment spans residues 31–161 (LEVSVGKATT…VDKLEEVDNT (131 aa)). Residues Asn-45, Asn-71, Asn-113, and Asn-142 are each glycosylated (N-linked (GlcNAc...) asparagine). A disulfide bridge links Cys-53 with Cys-131. The helical transmembrane segment at 162-182 (VTLIILAVVGGVIGLLVCILL) threads the bilayer. At 183-228 (LKKLITFILKKTREKKKECLVSSSGNDNTENGLPGSKAEEKPPTKV) the chain is on the cytoplasmic side. Residues 199-228 (KECLVSSSGNDNTENGLPGSKAEEKPPTKV) are disordered. The segment covering 203–213 (VSSSGNDNTEN) has biased composition (polar residues). Residues 219–228 (KAEEKPPTKV) show a composition bias toward basic and acidic residues.

This sequence belongs to the sodium channel auxiliary subunit SCN4B (TC 8.A.17) family. In terms of assembly, a voltage-gated sodium (Nav) channel consists of an ion-conducting pore-forming alpha subunit functional on its own that is regulated by one or more beta subunits. The beta subunit SCN4B is disulfide-linked to the pore-forming alpha subunit. Interacts with SCN1A; regulatory subunit of SCN1A/Nav1.1. Interacts with SCN2A; regulatory subunit of SCN2A/Nav1.2. Contains an interchain disulfide bond with SCN2A. As to expression, expressed at a high level in dorsal root ganglia, at a lower level in brain, spinal cord, skeletal muscle and heart.

The protein resides in the cell membrane. Its function is as follows. Regulatory subunit of multiple voltage-gated sodium (Nav) channels directly mediating the depolarization of excitable membranes. Navs, also called VGSCs (voltage-gated sodium channels) or VDSCs (voltage-dependent sodium channels), operate by switching between closed and open conformations depending on the voltage difference across the membrane. In the open conformation they allow Na(+) ions to selectively pass through the pore, along their electrochemical gradient. The influx of Na+ ions provokes membrane depolarization, initiating the propagation of electrical signals throughout cells and tissues. The accessory beta subunits participate in localization and functional modulation of the Nav channels. Modulates the activity of SCN1A/Nav1.1. Modulates the activity of SCN2A/Nav1.2. The protein is Sodium channel regulatory subunit beta-4 of Rattus norvegicus (Rat).